Reading from the N-terminus, the 327-residue chain is Transcription factor bHLH48 (327 aa).

The interval 137–179 (EPAETDSMVENQNQSYSSGKRKEREKKVKSSTKKNKSSVESDK) is disordered. A bHLH domain is found at 191–241 (QATDNHSLAERARREKINARMKLLQELVPGCDKIQGTALVLDEIINHVQTL).

Homodimer. In terms of tissue distribution, expressed in leaves, stems, and flowers.

The protein resides in the nucleus. The protein is Transcription factor bHLH48 (BHLH48) of Arabidopsis thaliana (Mouse-ear cress).